Here is a 310-residue protein sequence, read N- to C-terminus: Translocator protein BipD (310 aa).

Coiled coils occupy residues Asp127–Tyr171 and Asp250–Thr299.

The protein belongs to the invasin protein D family.

The protein localises to the secreted. In terms of biological role, required for invasion of epithelial cells, as well as for survival within host cells, escape from endocytic vesicles and subsequent actin-tail formation. Probably regulates the secretion of effectors BipB and BipC and their final integration into the target cell membrane. This is Translocator protein BipD (bipD) from Burkholderia thailandensis (strain ATCC 700388 / DSM 13276 / CCUG 48851 / CIP 106301 / E264).